The chain runs to 546 residues: UDP-glycosyltransferase FPY2 (546 aa).

The N-terminal stretch at 1–20 is a signal peptide; sequence MSLPKAQILVVVTVGGSTNS. Residues 517–537 form a helical membrane-spanning segment; the sequence is LNNIDVALLFFILLGIISWIT.

The protein belongs to the glycosyltransferase 28 family.

It localises to the membrane. It participates in secondary metabolite biosynthesis. Functionally, UDP-glycosyltransferase; part of the gene cluster that mediates the biosynthesis of the gamma-pyrones fusapyrone (FPY) and deoxyfusapyrone (dFPY). FPY is an undecaketide and thus likely synthesized by the polyketide synthase FPY1 from acetyl-CoA functioning as starter unit and the addition of 10 malonyl-CoA extender units by successive Claisen-condensations. Next to this, FPY shares some rare features: C-glycosylated 4-deoxyglucose at C-3, a gem-dimethyl group at C-13, and an alpha-beta to beta-gamma double bond shift at C-20. During FPY biosynthesis mono-C-methyl groups are transferred to the tetra-, penta-, hexa- and heptaketide, while two C-methyl groups are transferred to the nonaketide, suggesting that the CMet domain is programmed to selectively catalyze two successive C-alpha-methylation reactions of the nonaketide, while other alpha-carbons are non- or mono-methylated only. While the origin of the 4'-deoxyglucose moiety remains opaque, its transfer to C-3 is most likely mediated by the C-glycosyltransferase FPY2. Next to this, the hydroxyl group present at C-33 and discriminating between FPY and dFPY, is likely to be installed by the cytochrome P450 monooxygenase FPY7. No putative function can be predicted for the remaining genes FPY3-FPY6. This chain is UDP-glycosyltransferase FPY2, found in Fusarium mangiferae (Mango malformation disease fungus).